The chain runs to 216 residues: Noggin-1 (216 aa).

The signal sequence occupies residues 1–18 (MDFPRFLLSAYLLLLSFA). Asparagine 55 carries N-linked (GlcNAc...) asparagine glycosylation.

This sequence belongs to the noggin family. In terms of assembly, homodimer; disulfide-linked.

It is found in the secreted. Inhibitor of bone morphogenetic proteins (BMP) signaling. May play an important role in the dorsoventral patterning of the embryo. This chain is Noggin-1 (nog1), found in Danio rerio (Zebrafish).